The following is a 419-amino-acid chain: 26S proteasome regulatory subunit 8 homolog B (419 aa).

202 to 209 (GPPGTGKT) serves as a coordination point for ATP. Lys-406 participates in a covalent cross-link: Glycyl lysine isopeptide (Lys-Gly) (interchain with G-Cter in ubiquitin).

It belongs to the AAA ATPase family. Component of the 19S regulatory particle (RP/PA700) base subcomplex of the 26S proteasome. The 26S proteasome is composed of a core protease (CP), known as the 20S proteasome, capped at one or both ends by the 19S regulatory particle (RP/PA700). The RP/PA700 complex is composed of at least 17 different subunits in two subcomplexes, the base and the lid, which form the portions proximal and distal to the 20S proteolytic core, respectively.

Its subcellular location is the cytoplasm. It localises to the nucleus. The 26S proteasome is involved in the ATP-dependent degradation of ubiquitinated proteins. The regulatory (or ATPase) complex confers ATP dependency and substrate specificity to the 26S complex. The sequence is that of 26S proteasome regulatory subunit 8 homolog B (RPT6B) from Arabidopsis thaliana (Mouse-ear cress).